Reading from the N-terminus, the 167-residue chain is MENIVLIGFMGSGKTTIGREIALLGGRFLLDTDQIIEQNMGKSINEIFESVGESGFRRIESQLILWLSANVKNAVIATGGGMPIYNDVAYLGYVFWLDMSFESILKRLTITEQEKRPLFSDISKARQLYNERKSIYKKQSKYIINGDASALEIARKIIECMDKEVQE.

Residue 8–15 participates in ATP binding; it reads GFMGSGKT.

Belongs to the shikimate kinase family.

It is found in the cytoplasm. It carries out the reaction shikimate + ATP = 3-phosphoshikimate + ADP + H(+). The protein operates within metabolic intermediate biosynthesis; chorismate biosynthesis; chorismate from D-erythrose 4-phosphate and phosphoenolpyruvate: step 5/7. This chain is Shikimate kinase, found in Helicobacter hepaticus (strain ATCC 51449 / 3B1).